Reading from the N-terminus, the 447-residue chain is uncharacterized protein (447 aa).

A disordered region spans residues 392–435 (RFTKPSSSVAKSTSPSLRNSGSDESDLNQSDSDKEDERVVPVPK). Residues 395–407 (KPSSSVAKSTSPS) show a composition bias toward low complexity. The segment covering 408–421 (LRNSGSDESDLNQS) has biased composition (polar residues).

This is an uncharacterized protein from Invertebrate iridescent virus 3 (IIV-3).